Here is a 151-residue protein sequence, read N- to C-terminus: MITDTCVLHIEEVLELLPHRFPFLLVDRVLNFEKGKFLRAVKNVSFNEPFFQGHFPGKPIFPGVLILEAMAQATGILAFKSTGKLAPGELYYFAAIDAARFKRPVQPGDQMILDVEFIKERRGIARFKGIATVNEEMACEASMMCARRKEI.

Residue His-54 is part of the active site.

This sequence belongs to the thioester dehydratase family. FabZ subfamily.

It is found in the cytoplasm. It catalyses the reaction a (3R)-hydroxyacyl-[ACP] = a (2E)-enoyl-[ACP] + H2O. Functionally, involved in unsaturated fatty acids biosynthesis. Catalyzes the dehydration of short chain beta-hydroxyacyl-ACPs and long chain saturated and unsaturated beta-hydroxyacyl-ACPs. The sequence is that of 3-hydroxyacyl-[acyl-carrier-protein] dehydratase FabZ from Blochmanniella pennsylvanica (strain BPEN).